The sequence spans 299 residues: uncharacterized protein (299 aa).

The tract at residues 1–20 (MTTKHELVINTNEPSAPNAD) is disordered. A helical transmembrane segment spans residues 172-192 (SFFIPPMVVISTPICLGLTVF).

This sequence belongs to the IIV-6 259R family.

It localises to the membrane. This is an uncharacterized protein from Acheta domesticus (House cricket).